Consider the following 459-residue polypeptide: MLKIYNSITRQKQEFKPITPGKIGMYVCGVTIYDLCHIGHGRTFVSFDMIVRYLRYAGYEVNFQRNITDVDDKIIKRANENNESCEALTERLIGEMHQDFDALNMLRPDFEPRATLHIAEIIDMVELLLARGHAYVASDGDVLFSVASYPDYGRLSGQNLDQLQAGARVEVDETKQNPMDFVLWKMSKPGEPTWESPWGPGRPGWHIECSAMNSKHLGLHFDIHGGGSDLQFPHHENEIAQSCCAHDTPYVNYWMHTGMVMVDREKMSKSLGNFFTIRDVLGHYDAETVRYFLLSGHYRSQLNYSEDNLKQARSALERLYTAIKDVDLTVAAAPAEEFIAKFKAAMDDDFNTPEAYSVLFDMVREINRLKLTDMAQASALAVTLKQLADVLGLLSQEPEAFFQGGGSDDEVAEIEALIVERNRARTEKDWAAADVARNRLNELGVELEDGPSGTTWRKK.

A Zn(2+)-binding site is contributed by Cys28. A 'HIGH' region motif is present at residues Val30–His40. The Zn(2+) site is built by Cys209, His234, and Glu238. The 'KMSKS' region signature appears at Lys266–Ser270. Lys269 provides a ligand contact to ATP.

This sequence belongs to the class-I aminoacyl-tRNA synthetase family. As to quaternary structure, monomer. Requires Zn(2+) as cofactor.

The protein resides in the cytoplasm. The catalysed reaction is tRNA(Cys) + L-cysteine + ATP = L-cysteinyl-tRNA(Cys) + AMP + diphosphate. In Shewanella baltica (strain OS195), this protein is Cysteine--tRNA ligase.